The sequence spans 335 residues: Casein kinase I (335 aa).

A Protein kinase domain is found at 9–278 (YRLGRKIGSG…LRRLFKDLFF (270 aa)). ATP-binding positions include 15 to 23 (IGSGSFGDI) and lysine 38. The active-site Proton acceptor is the aspartate 128. Residues 304–335 (RSMVNQGAESGNQWRRDASGRDPLGRLPQLEP) form a disordered region. Residues 305-316 (SMVNQGAESGNQ) show a composition bias toward polar residues. Residues 317 to 327 (WRRDASGRDPL) are compositionally biased toward basic and acidic residues.

The protein belongs to the protein kinase superfamily. CK1 Ser/Thr protein kinase family. Casein kinase I subfamily.

The enzyme catalyses L-seryl-[protein] + ATP = O-phospho-L-seryl-[protein] + ADP + H(+). It carries out the reaction L-threonyl-[protein] + ATP = O-phospho-L-threonyl-[protein] + ADP + H(+). Functionally, casein kinases are operationally defined by their preferential utilization of acidic proteins such as caseins as substrates. It can phosphorylate a large number of proteins. This chain is Casein kinase I, found in Eimeria tenella (Coccidian parasite).